Here is a 436-residue protein sequence, read N- to C-terminus: Cyclin-dependent kinase 11B (436 aa).

The Nuclear localization signal motif lies at V25–K30. A calmodulin-binding region spans residues K30 to E44. One can recognise a Protein kinase domain in the interval F79–F364. ATP is bound by residues I85 to V93 and K108. S123 carries the phosphoserine; by CDK7 modification. Phosphothreonine; by CDK7 is present on T129. The Proton acceptor role is filled by D203. At S230 the chain carries Phosphoserine. Y235 bears the Phosphotyrosine mark. A Phosphothreonine modification is found at T236. Residue K282 forms a Glycyl lysine isopeptide (Lys-Gly) (interchain with G-Cter in SUMO2) linkage. Residues S383–L406 form a disordered region. T392 bears the Phosphothreonine mark. Position 393 is a phosphoserine (S393).

This sequence belongs to the protein kinase superfamily. CMGC Ser/Thr protein kinase family. CDC2/CDKX subfamily. In terms of assembly, may interact PAK1 and RANBP9. p110C interacts with RNPS1. Interacts with CCND3. Interacts with CCNL1 and CCNL2. Forms complexes with pre-mRNA-splicing factors, including at least SRSF1, SRSF2 AND SRSF7/SLU7. Requires Mg(2+) as cofactor.

Its subcellular location is the cytoplasm. The protein resides in the nucleus membrane. The protein localises to the endomembrane system. It localises to the perinuclear region. The catalysed reaction is L-seryl-[protein] + ATP = O-phospho-L-seryl-[protein] + ADP + H(+). The enzyme catalyses L-threonyl-[protein] + ATP = O-phospho-L-threonyl-[protein] + ADP + H(+). Plays multiple roles in cell cycle progression, cytokinesis and apoptosis. Involved in pre-mRNA splicing in a kinase activity-dependent manner. May act as a negative regulator of normal cell cycle progression. The polypeptide is Cyclin-dependent kinase 11B (Cdk11b) (Rattus norvegicus (Rat)).